We begin with the raw amino-acid sequence, 489 residues long: Rhamnulokinase (489 aa).

ATP is bound at residue 13–17 (ASSGR). A disulfide bridge links Cys68 with Cys222. Substrate-binding positions include Gly83 and 236–238 (HDT). Catalysis depends on Asp237, which acts as the Proton acceptor. Thr259 provides a ligand contact to ATP. Asn296 lines the substrate pocket. Gln304 is a binding site for ATP. The cysteines at positions 353 and 370 are disulfide-linked. Gly402 lines the ATP pocket. A disulfide bridge connects residues Cys413 and Cys417.

The protein belongs to the rhamnulokinase family. Mg(2+) is required as a cofactor.

It carries out the reaction L-rhamnulose + ATP = L-rhamnulose 1-phosphate + ADP + H(+). The protein operates within carbohydrate degradation; L-rhamnose degradation; glycerone phosphate from L-rhamnose: step 2/3. Functionally, involved in the catabolism of L-rhamnose (6-deoxy-L-mannose). Catalyzes the transfer of the gamma-phosphate group from ATP to the 1-hydroxyl group of L-rhamnulose to yield L-rhamnulose 1-phosphate. In Salmonella heidelberg (strain SL476), this protein is Rhamnulokinase.